Reading from the N-terminus, the 292-residue chain is ATP synthase gamma chain (292 aa).

Belongs to the ATPase gamma chain family. As to quaternary structure, F-type ATPases have 2 components, CF(1) - the catalytic core - and CF(0) - the membrane proton channel. CF(1) has five subunits: alpha(3), beta(3), gamma(1), delta(1), epsilon(1). CF(0) has three main subunits: a, b and c.

The protein resides in the cell inner membrane. Its function is as follows. Produces ATP from ADP in the presence of a proton gradient across the membrane. The gamma chain is believed to be important in regulating ATPase activity and the flow of protons through the CF(0) complex. The sequence is that of ATP synthase gamma chain from Brucella abortus (strain S19).